A 285-amino-acid polypeptide reads, in one-letter code: MQLCGFNVGLDQRFFLIAGTCSIEGLEMSLDVAGQLKEACAPLGIPLIYKGSFDKANRSSGTSKRGVGLDAGLKILDEVRRQLQLPILTDVHDTSHVAEVASVVDVLQTPAFLCRQTDFIRAVAQSGKPVNIKKGQFLAPWDMKNVIDKARAAAREVGLSEDRFLACERGVSFGYNNLVADMTSLAEMRNSGAPVVFDVTHSVQKPGGLGAVSGGARDMVPVLARAGVAVGVAGLFMETHPKPAEAWSDGPNAVPLKHMRALLETLVALDDVTKKNGFLENNFGA.

It belongs to the KdsA family.

Its subcellular location is the cytoplasm. It catalyses the reaction D-arabinose 5-phosphate + phosphoenolpyruvate + H2O = 3-deoxy-alpha-D-manno-2-octulosonate-8-phosphate + phosphate. The protein operates within carbohydrate biosynthesis; 3-deoxy-D-manno-octulosonate biosynthesis; 3-deoxy-D-manno-octulosonate from D-ribulose 5-phosphate: step 2/3. Its pathway is bacterial outer membrane biogenesis; lipopolysaccharide biosynthesis. This chain is 2-dehydro-3-deoxyphosphooctonate aldolase, found in Acidovorax ebreus (strain TPSY) (Diaphorobacter sp. (strain TPSY)).